The following is a 916-amino-acid chain: Translation initiation factor IF-2 (916 aa).

The disordered stretch occupies residues 55 to 324; it reads EPKAVTPTSK…NHNANLKPVT (270 aa). The span at 77–88 shows a compositional bias: low complexity; that stretch reads AAEPKAAATKPA. Composition is skewed to basic and acidic residues over residues 98 to 121, 129 to 161, and 198 to 212; these read FKAEREARAKAEAERRQNNGERRN, RQKDNRNHGSQDRRNDNRNNRNRQNDNRRDNRN, and RQSETRFHEAQEAKR. The span at 227–250 shows a compositional bias: low complexity; it reads KEQPTVEAAATAAPQAQPQTVEQV. Residues 264-281 are compositionally biased toward basic and acidic residues; sequence ARPDKSRDFSHENEDGPK. The segment covering 291–304 has biased composition (low complexity); the sequence is KQNQVRNQKNSNWN. Residues 305-314 are compositionally biased toward basic residues; that stretch reads KKNKKSKNNR. Residues 418 to 585 enclose the tr-type G domain; the sequence is ERAPVVTIMG…TVLLVAEIQE (168 aa). Positions 427-434 are G1; that stretch reads GHVDHGKT. 427–434 is a binding site for GTP; it reads GHVDHGKT. Residues 452–456 are G2; that stretch reads GITQH. A G3 region spans residues 473–476; sequence DTPG. Residues 473–477 and 527–530 each bind GTP; these read DTPGH and NKID. The G4 stretch occupies residues 527–530; the sequence is NKID. The interval 563-565 is G5; it reads SAK.

The protein belongs to the TRAFAC class translation factor GTPase superfamily. Classic translation factor GTPase family. IF-2 subfamily.

It localises to the cytoplasm. One of the essential components for the initiation of protein synthesis. Protects formylmethionyl-tRNA from spontaneous hydrolysis and promotes its binding to the 30S ribosomal subunits. Also involved in the hydrolysis of GTP during the formation of the 70S ribosomal complex. The polypeptide is Translation initiation factor IF-2 (Streptococcus mutans serotype c (strain ATCC 700610 / UA159)).